The sequence spans 318 residues: Ubiquinol oxidase, mitochondrial (318 aa).

A mitochondrion-targeting transit peptide spans 1–46 (MTVMRGLLNGGRYGNRYIWTAISLRHPEVMEGNGLESAVMQWRRML). The helical transmembrane segment at 143-163 (AMMLETVAAVPGMVGGMLLHL) threads the bilayer. Fe cation contacts are provided by E147, E186, and H189. The helical transmembrane segment at 205-225 (LLVLAVQGVFFNSFFVLYVLS) threads the bilayer. Residues E237, E288, and H291 each contribute to the Fe cation site.

Belongs to the alternative oxidase family. Homodimer; disulfide-linked. It depends on Fe cation as a cofactor.

The protein resides in the mitochondrion inner membrane. The enzyme catalyses 2 a ubiquinol + O2 = 2 a ubiquinone + 2 H2O. In terms of biological role, catalyzes the cyanide-resistant oxidation of ubiquinol and the reduction of molecular oxygen to water, but does not translocate protons and consequently is not linked to oxidative phosphorylation. May increase respiration when the cytochrome respiratory pathway is restricted, or in response to low temperatures. This is Ubiquinol oxidase, mitochondrial (AOMI 1) from Mangifera indica (Mango).